Here is an 859-residue protein sequence, read N- to C-terminus: Paladin (859 aa).

The disordered stretch occupies residues 1–34 (MGTTASTAQQTVSAGTSLEGLQGGSSSSMDSQHS). A lipid anchor (N-myristoyl glycine) is attached at glycine 2. Serine 89 carries the phosphoserine modification.

This sequence belongs to the paladin family. In terms of tissue distribution, vascular expression detected in the central nervous system, kidney, lung, heart, skeletal muscle, white adipose tissue (WAT), brown adipose tissue, liver, pancreas and spleen. Not expressed in all vessels: for instance, not expressed in capillaries in the brain, and expressed mainly in large vessels in the heart, WAT, liver, pancreas and kidney. Predominant nonvascular expression in myocardium and lung mesenchyme. In large vessels, primarily expressed by smooth muscle cells, but occasionally detected at low levels in the endothelium. Expressed in various cells of the hematopoietic lineage.

It localises to the cytoplasm. The protein localises to the cytosol. The sequence is that of Paladin (Pald1) from Mus musculus (Mouse).